The following is a 382-amino-acid chain: Methylthioribose-1-phosphate isomerase (382 aa).

The Proton donor role is filled by D258.

Belongs to the eIF-2B alpha/beta/delta subunits family. MtnA subfamily.

Its subcellular location is the cytoplasm. The protein resides in the nucleus. The catalysed reaction is 5-(methylsulfanyl)-alpha-D-ribose 1-phosphate = 5-(methylsulfanyl)-D-ribulose 1-phosphate. It functions in the pathway amino-acid biosynthesis; L-methionine biosynthesis via salvage pathway; L-methionine from S-methyl-5-thio-alpha-D-ribose 1-phosphate: step 1/6. In terms of biological role, catalyzes the interconversion of methylthioribose-1-phosphate (MTR-1-P) into methylthioribulose-1-phosphate (MTRu-1-P). The sequence is that of Methylthioribose-1-phosphate isomerase from Laccaria bicolor (strain S238N-H82 / ATCC MYA-4686) (Bicoloured deceiver).